A 381-amino-acid chain; its full sequence is NF-kappa-B inhibitor-like protein 1 (381 aa).

The disordered stretch occupies residues M1 to E34. ANK repeat units follow at residues G64–H93 and H97–K133. Disordered stretches follow at residues K131–Q167, G186–E242, and E256–L294. Residue S150 is modified to Phosphoserine. Residues S150 to A159 show a composition bias toward acidic residues. Basic and acidic residues predominate over residues E256 to R287.

In terms of assembly, interacts with CACTIN (via N-terminal domain); the interaction occurs in a pro-inflammatory-independent manner.

The protein resides in the nucleus. Functionally, involved in the regulation of innate immune response. Acts as negative regulator of Toll-like receptor and interferon-regulatory factor (IRF) signaling pathways. Contributes to the negative regulation of transcriptional activation of NF-kappa-B target genes in response to endogenous pro-inflammatory stimuli. The polypeptide is NF-kappa-B inhibitor-like protein 1 (NFKBIL1) (Macaca mulatta (Rhesus macaque)).